The chain runs to 1802 residues: Non-reducing polyketide synthase nscA (1802 aa).

Residues 27–261 (DLFRRLDQHS…PLPVYDGLCH (235 aa)) are N-terminal acylcarrier protein transacylase domain (SAT). Residues 396–829 (SSKLAIVGMA…GGNTTLLLED (434 aa)) enclose the Ketosynthase family 3 (KS3) domain. Active-site for beta-ketoacyl synthase activity residues include cysteine 569, histidine 704, and histidine 747. Residues 935-1235 (FTGQGAYYHG…SASAIPSCRR (301 aa)) are malonyl-CoA:ACP transacylase (MAT) domain. The interval 1322–1641 (TSLVHQITAE…RLLMDRFFSP (320 aa)) is product template (PT) domain. The tract at residues 1326–1462 (HQITAETVEA…ATIRFEDPEA (137 aa)) is N-terminal hotdog fold. The PKS/mFAS DH domain maps to 1326–1636 (HQITAETVEA…FRRVPRLLMD (311 aa)). The active-site Proton acceptor; for dehydratase activity is histidine 1358. Positions 1490–1636 (ASRLSKPLAY…FRRVPRLLMD (147 aa)) are C-terminal hotdog fold. Aspartate 1547 serves as the catalytic Proton donor; for dehydratase activity. The segment at 1699–1729 (LLATSSKSSTPKESPIVTPAESERAEPVDNS) is disordered. The span at 1702 to 1713 (TSSKSSTPKESP) shows a compositional bias: low complexity. The region spanning 1725 to 1802 (PVDNSMTSQC…EMTAWIEEYC (78 aa)) is the Carrier domain. Residue serine 1762 is modified to O-(pantetheine 4'-phosphoryl)serine.

It depends on pantetheine 4'-phosphate as a cofactor.

The protein operates within secondary metabolite biosynthesis. Non-reducing polyketide synthase; part of the gene cluster that mediates the biosynthesis of neosartoricin B, a prenylated anthracenone that probably exhibits T-cell antiproliferative activity, suggestive of a physiological role as an immunosuppressive agent. The non-reducing polyketide synthase nscA probably synthesizes and cyclizes the decaketide backbone. The hydrolase nscB then mediates the product release through hydrolysis followed by spontaneous decarboxylation. The prenyltransferase nscD catalyzes the addition of the dimethylallyl group to the aromatic C5. The FAD-dependent monooxygenase nscC is then responsible for the stereospecific hydroxylation at C2. Neosartoricin B can be converted into two additional compounds neosartoricins C and D. Neosartoricin C is a spirocyclic compound that is cyclized through the attack of C3 hydroxyl on C14, followed by dehydration. On the other hand, neosartoricin D is a further cyclized compound in which attack of C2 on C14 in neosartoricin C results in the formation of the acetal-containing dioxabicyclo-octanone ring. Both of these compounds are novel and possibly represent related metabolites of the gene cluster. In Trichophyton tonsurans (strain CBS 112818) (Scalp ringworm fungus), this protein is Non-reducing polyketide synthase nscA.